A 75-amino-acid polypeptide reads, in one-letter code: Small ribosomal subunit protein bS18 (75 aa).

It belongs to the bacterial ribosomal protein bS18 family. In terms of assembly, part of the 30S ribosomal subunit. Forms a tight heterodimer with protein bS6.

Binds as a heterodimer with protein bS6 to the central domain of the 16S rRNA, where it helps stabilize the platform of the 30S subunit. In Buchnera aphidicola subsp. Baizongia pistaciae (strain Bp), this protein is Small ribosomal subunit protein bS18.